A 494-amino-acid chain; its full sequence is Catalase isozyme 2 (494 aa).

Residues 1–29 (MDPCKFRPSSSFDTKTTTTNAGQPVWNDN) form a disordered region. Residues 8-22 (PSSSFDTKTTTTNAG) show a composition bias toward polar residues. Active-site residues include H65 and N138. A heme-binding site is contributed by Y348.

This sequence belongs to the catalase family. In terms of assembly, homotetramer. Heme serves as cofactor.

The protein localises to the peroxisome. It is found in the glyoxysome. It carries out the reaction 2 H2O2 = O2 + 2 H2O. Functionally, occurs in almost all aerobically respiring organisms and serves to protect cells from the toxic effects of hydrogen peroxide. This is Catalase isozyme 2 (CAT2) from Hordeum vulgare (Barley).